Reading from the N-terminus, the 217-residue chain is Uracil-DNA glycosylase (217 aa).

The active-site Proton acceptor is the D62.

Belongs to the uracil-DNA glycosylase (UDG) superfamily. UNG family.

The protein localises to the cytoplasm. The enzyme catalyses Hydrolyzes single-stranded DNA or mismatched double-stranded DNA and polynucleotides, releasing free uracil.. In terms of biological role, excises uracil residues from the DNA which can arise as a result of misincorporation of dUMP residues by DNA polymerase or due to deamination of cytosine. In Streptococcus pyogenes serotype M4 (strain MGAS10750), this protein is Uracil-DNA glycosylase.